A 288-amino-acid chain; its full sequence is Intermediate transcription factor 3 small subunit (288 aa).

The protein belongs to the orthopoxvirus OPG134 family. In terms of assembly, heterodimer of a 45 kDa (A23R) and a 32 kDa (A8R) subunit to form the virus intermediate transcription factor (VITF)-3.

Its function is as follows. Acts with RNA polymerase to initiate transcription from intermediate gene promoters. In Homo sapiens (Human), this protein is Intermediate transcription factor 3 small subunit (OPG134).